The following is a 141-amino-acid chain: Large ribosomal subunit protein uL14 (141 aa).

This sequence belongs to the universal ribosomal protein uL14 family.

In Tetrahymena thermophila (strain SB210), this protein is Large ribosomal subunit protein uL14 (RPL23).